A 215-amino-acid chain; its full sequence is CASP-like protein UU3 (215 aa).

Over 1-44 (MATAWESEYFDKVTPGERERAVPPMVPQQTPPPVYIQPQVSRNG) the chain is Cytoplasmic. The chain crosses the membrane as a helical span at residues 45–65 (IVASIVLRLLTLIFAVVALAV). At 66–93 (LASNTGSFQVSTGSATSVKTIKFTILSA) the chain is on the extracellular side. Residues 94–114 (FTYLFAVCGVVAVYSLLLIIV) traverse the membrane as a helical segment. Over 115–128 (EMIDLAVRGFTTHT) the chain is Cytoplasmic. Residues 129–149 (LVAIFVFVLDQTMAYVLISAA) form a helical membrane-spanning segment. At 150–185 (SASANGVKVSRDESNITGYKFDISCSNLGIDDYCTK) the chain is on the extracellular side. Asn164 carries N-linked (GlcNAc...) asparagine glycosylation. Residues 186–206 (ASASVAIAFIAFLFMAITAGV) form a helical membrane-spanning segment. Topologically, residues 207 to 215 (SARRLFKLP) are cytoplasmic.

Belongs to the Casparian strip membrane proteins (CASP) family. Homodimer and heterodimers.

The protein localises to the cell membrane. This chain is CASP-like protein UU3, found in Physcomitrium patens (Spreading-leaved earth moss).